The following is a 485-amino-acid chain: Protein DETOXIFICATION 14 (485 aa).

The next 12 membrane-spanning stretches (helical) occupy residues 30 to 50, 68 to 88, 112 to 132, 147 to 167, 175 to 195, 207 to 227, 259 to 279, 288 to 308, 329 to 349, 372 to 392, 405 to 425, and 432 to 452; these read LSYIAGPMIAVNSSMYVLQVI, IAVSFCSVTGFSVVFGLASAL, IVSLFLVCIPLSLLWTYIGDI, GKFATWLIPALFGYATLQPLV, LILPLVMSSVSSLCIHIVLCW, GAAIAIGVSYWLNVTVLGLYM, ASMICLEWWSFEFLVLLSGIL, VLSVCLSTQSSLYQIPESLGA, AVYTAMVITGVESIMVGAIVF, MAPLLSLSVIFDALHAALSGV, VNLAAYYLFGIPTAILLAFGF, and LWIGITVGSCVQAVLLGLIVI.

This sequence belongs to the multi antimicrobial extrusion (MATE) (TC 2.A.66.1) family.

It is found in the membrane. This Arabidopsis thaliana (Mouse-ear cress) protein is Protein DETOXIFICATION 14.